The following is a 363-amino-acid chain: Cellular tumor antigen p53 (363 aa).

The interval 1-29 (MEPSSETGMDPPLSQETFEDLWSLLPDPL) is transcription activation (acidic). The DNA-binding element occupies 76 to 267 (DYAGKYGLQL…RTEEDNYTKK (192 aa)). Zn(2+) is bound by residues Cys-150, His-153, Cys-213, and Cys-217. The tract at residues 248-255 (RVCACPGR) is interaction with DNA. The disordered stretch occupies residues 257 to 290 (RRTEEDNYTKKRGLKPSGKRELAHPPSSEPPLPK). The Bipartite nuclear localization signal motif lies at 275–292 (KRELAHPPSSEPPLPKKR). The oligomerization stretch occupies residues 300–331 (EEIFTLRIKGRSRYEMIKKLNDALELQESLDQ). A Nuclear export signal motif is present at residues 314-325 (EMIKKLNDALEL). Residues 344 to 356 (EIKPKKGKKLLVK) form a basic (repression of DNA-binding) region.

It belongs to the p53 family. In terms of assembly, binds DNA as a homotetramer. Zn(2+) is required as a cofactor. Ubiquitous.

The protein localises to the cytoplasm. The protein resides in the nucleus. Multifunctional transcription factor that induces cell cycle arrest, DNA repair or apoptosis upon binding to its target DNA sequence. Acts as a tumor suppressor in many tumor types; induces growth arrest or apoptosis depending on the physiological circumstances and cell type. Negatively regulates cell division by controlling expression of a set of genes required for this process. One of the activated genes is an inhibitor of cyclin-dependent kinases. Apoptosis induction seems to be mediated either by stimulation of BAX and FAS antigen expression, or by repression of Bcl-2 expression. This Xenopus laevis (African clawed frog) protein is Cellular tumor antigen p53 (tp53).